The sequence spans 793 residues: ClpA homolog protein (793 aa).

The interval 1–24 (MRPRSNAGSSPPDPEEQEHAQVPS) is disordered. Positions 22–168 (VPSFSSTLEQ…NFIAHGVAKD (147 aa)) constitute a Clp R domain. 2 repeat regions span residues 25–88 (FSST…IDDD) and 103–168 (PTAA…VAKD). A disordered region spans residues 169 to 194 (PSYGESRPVQGADEPQETPKAEAGEA). Positions 185–194 (ETPKAEAGEA) are enriched in basic and acidic residues. An i region spans residues 199 to 447 (LSKYCVDLNI…AQHLVSDSKR (249 aa)). ATP-binding positions include 244–251 (GDPGVGKT) and 525–532 (GPTGVGKT). Residues 451–639 (LGTKEIEAVV…ILIMTSNVGA (189 aa)) form an II region.

It belongs to the ClpA/ClpB family.

This is ClpA homolog protein from Fuscovulum blasticum (Rhodobacter blasticus).